Here is an 884-residue protein sequence, read N- to C-terminus: DNA mismatch repair protein MutS (884 aa).

Position 643–650 (643–650 (GPNMGGKS)) interacts with ATP.

Belongs to the DNA mismatch repair MutS family.

In terms of biological role, this protein is involved in the repair of mismatches in DNA. It is possible that it carries out the mismatch recognition step. This protein has a weak ATPase activity. The protein is DNA mismatch repair protein MutS of Methylobacillus flagellatus (strain ATCC 51484 / DSM 6875 / VKM B-1610 / KT).